An 82-amino-acid polypeptide reads, in one-letter code: Small ribosomal subunit protein uS17 (82 aa).

The protein belongs to the universal ribosomal protein uS17 family. Part of the 30S ribosomal subunit.

Functionally, one of the primary rRNA binding proteins, it binds specifically to the 5'-end of 16S ribosomal RNA. The protein is Small ribosomal subunit protein uS17 of Shewanella halifaxensis (strain HAW-EB4).